A 152-amino-acid polypeptide reads, in one-letter code: Clitocypin-5 (152 aa).

As to quaternary structure, homodimer.

Binds and inhibits cysteine proteinases. Inhibits most strongly papain and cathepsin L, more weakly bromelain and cathepsin B while it is completely ineffective against cathepsin H. The sequence is that of Clitocypin-5 (clt5) from Clitocybe nebularis (Clouded agaric).